The chain runs to 515 residues: Nectin-1 (515 aa).

An N-terminal signal peptide occupies residues 1–30 (MARMGLAGAAGRWWGLALGLTAFFLPGAHT). The Ig-like V-type domain occupies 31–141 (QVVQVNDSMY…GNRESQLNLT (111 aa)). At 31-355 (QVVQVNDSMY…GRRAGQVPTA (325 aa)) the chain is on the extracellular side. N-linked (GlcNAc...) asparagine glycosylation is found at Asn-36, Asn-72, Asn-139, Asn-202, Asn-286, Asn-297, Asn-307, and Asn-332. Cys-51 and Cys-124 are oxidised to a cystine. Ig-like C2-type domains follow at residues 145–243 (KPTN…TLNV) and 247–334 (PEVT…VNIT). 2 disulfide bridges follow: Cys-172-Cys-226 and Cys-269-Cys-316. The interaction with FGFR stretch occupies residues 282 to 299 (WTTLNGSLPKGVEAQNRT). The helical transmembrane segment at 356–376 (IIGGVVGSILLVLFVVGGIVV) threads the bilayer. The Cytoplasmic portion of the chain corresponds to 377–515 (ALCRRRHTFK…SFISKKEWYV (139 aa)). Positions 400–486 (YSKAGIPQHH…DGYGDRTLGY (87 aa)) are disordered. Residues Ser-422, Ser-434, and Ser-435 each carry the phosphoserine modification. Tyr-436 bears the Phosphotyrosine mark. Residues 436-445 (YEEEEEEEGG) are compositionally biased toward acidic residues. The span at 446-464 (GGERKVGGPHPKYDEDAKR) shows a compositional bias: basic and acidic residues. Residue Ser-509 is modified to Phosphoserine.

The protein belongs to the nectin family. As to quaternary structure, (Microbial infection) Interacts with herpes pseudorabies virus/PRV envelope glycoprotein D.

Its subcellular location is the cell membrane. It is found in the cell junction. It localises to the adherens junction. The protein localises to the presynaptic cell membrane. Its function is as follows. (Microbial infection) Acts as a receptor for herpes simplex virus 1/HHV-1, herpes simplex virus 2/HHV-2, and pseudorabies virus/PRV. This chain is Nectin-1, found in Sus scrofa (Pig).